A 204-amino-acid polypeptide reads, in one-letter code: Minor allergen Alt a 7 (204 aa).

The 191-residue stretch at 5–195 (IAIVYYSMYG…NIAQAQGKAF (191 aa)) folds into the Flavodoxin-like domain.

Belongs to the WrbA family.

It localises to the cytoplasm. The chain is Minor allergen Alt a 7 (ALTA7) from Alternaria alternata (Alternaria rot fungus).